The chain runs to 350 residues: S-adenosylmethionine:tRNA ribosyltransferase-isomerase (350 aa).

Belongs to the QueA family. In terms of assembly, monomer.

It is found in the cytoplasm. The catalysed reaction is 7-aminomethyl-7-carbaguanosine(34) in tRNA + S-adenosyl-L-methionine = epoxyqueuosine(34) in tRNA + adenine + L-methionine + 2 H(+). It participates in tRNA modification; tRNA-queuosine biosynthesis. Functionally, transfers and isomerizes the ribose moiety from AdoMet to the 7-aminomethyl group of 7-deazaguanine (preQ1-tRNA) to give epoxyqueuosine (oQ-tRNA). The chain is S-adenosylmethionine:tRNA ribosyltransferase-isomerase from Saccharophagus degradans (strain 2-40 / ATCC 43961 / DSM 17024).